We begin with the raw amino-acid sequence, 707 residues long: Serine/threonine protein kinase UL97 (707 aa).

Residues 1-14 (MSSALRSRARSASL) show a composition bias toward low complexity. 4 disordered regions span residues 1-32 (MSSALRSRARSASLGTTTQGWDPPPLRRPSRA), 113-147 (DGEKEDAASDKENQRRPVVPSTSSRGSAASGDGYH), 176-199 (FTGGSDPSDSVSGVRGGRKRPLRP), and 231-264 (ESQDSAVASGPGRVPQPLSGSSGEESATAVEADS). Basic and acidic residues predominate over residues 113–127 (DGEKEDAASDKENQR). Low complexity predominate over residues 178–188 (GGSDPSDSVSG). The Proton acceptor role is filled by Asp456.

This sequence belongs to the protein kinase superfamily. Tyr protein kinase family. HCMV ganciclovir subfamily. Interacts with UL83. Post-translationally, autophosphorylates on serine and threonine residues.

It localises to the virion. The enzyme catalyses L-seryl-[protein] + ATP = O-phospho-L-seryl-[protein] + ADP + H(+). It carries out the reaction L-threonyl-[protein] + ATP = O-phospho-L-threonyl-[protein] + ADP + H(+). In terms of biological role, serine/threonine protein kinase that plays important roles in several processes including nuclear viral egress, viral replication or regulation of host cell cycle progression. Participates in the acquisition of tegument during virion morphogenesis in the nucleus. Redistributes the host nuclear lamina by phosphorylating cellular Lamins-A/C. Plays a role in viral DNA synthesis by phosphorylating the DNA polymerase processivity factor UL44. Stimulates host cell cycle to support viral DNA synthesis by phosphorylating host retinoblastoma/RB1 protein. Additional substrates have been identified including host EF1D or H2B. Also phosphorylates host SAMHD1 and thereby counteracts its antiviral effect by reducing its dNTP hydrolase activity. This Homo sapiens (Human) protein is Serine/threonine protein kinase UL97 (UL97).